A 495-amino-acid chain; its full sequence is Lysine--tRNA ligase (495 aa).

2 residues coordinate Mg(2+): Glu-406 and Glu-413.

It belongs to the class-II aminoacyl-tRNA synthetase family. As to quaternary structure, homodimer. Requires Mg(2+) as cofactor.

It is found in the cytoplasm. It catalyses the reaction tRNA(Lys) + L-lysine + ATP = L-lysyl-tRNA(Lys) + AMP + diphosphate. The sequence is that of Lysine--tRNA ligase from Staphylococcus aureus (strain MRSA252).